The following is a 365-amino-acid chain: Paraneoplastic antigen Ma2 homolog (365 aa).

N-acetylalanine is present on A2. Positions 336–365 (EEEDAYFEQESREEPGEREGSGCWNNSRNN) are disordered. Residues 344 to 355 (QESREEPGEREG) show a composition bias toward basic and acidic residues.

Belongs to the PNMA family. As to expression, expressed in the cerebrum, cerebellum and testis.

The protein resides in the nucleus. It localises to the nucleolus. This is Paraneoplastic antigen Ma2 homolog (Pnma2) from Mus musculus (Mouse).